We begin with the raw amino-acid sequence, 237 residues long: Type III pantothenate kinase (237 aa).

6–13 is a binding site for ATP; it reads DAGNSRVK. Substrate is bound by residues Y86 and 93–96; that span reads GADR. The Proton acceptor role is filled by D95. Position 118 (T118) interacts with ATP. T168 contacts substrate.

Belongs to the type III pantothenate kinase family. Homodimer. NH4(+) serves as cofactor. Requires K(+) as cofactor.

Its subcellular location is the cytoplasm. It carries out the reaction (R)-pantothenate + ATP = (R)-4'-phosphopantothenate + ADP + H(+). Its pathway is cofactor biosynthesis; coenzyme A biosynthesis; CoA from (R)-pantothenate: step 1/5. Catalyzes the phosphorylation of pantothenate (Pan), the first step in CoA biosynthesis. The chain is Type III pantothenate kinase from Chromobacterium violaceum (strain ATCC 12472 / DSM 30191 / JCM 1249 / CCUG 213 / NBRC 12614 / NCIMB 9131 / NCTC 9757 / MK).